Reading from the N-terminus, the 338-residue chain is Tetraacyldisaccharide 4'-kinase (338 aa).

63 to 70 (TVGGSGKT) is an ATP binding site.

It belongs to the LpxK family.

It carries out the reaction a lipid A disaccharide + ATP = a lipid IVA + ADP + H(+). Its pathway is glycolipid biosynthesis; lipid IV(A) biosynthesis; lipid IV(A) from (3R)-3-hydroxytetradecanoyl-[acyl-carrier-protein] and UDP-N-acetyl-alpha-D-glucosamine: step 6/6. In terms of biological role, transfers the gamma-phosphate of ATP to the 4'-position of a tetraacyldisaccharide 1-phosphate intermediate (termed DS-1-P) to form tetraacyldisaccharide 1,4'-bis-phosphate (lipid IVA). The polypeptide is Tetraacyldisaccharide 4'-kinase (Shewanella loihica (strain ATCC BAA-1088 / PV-4)).